A 1441-amino-acid polypeptide reads, in one-letter code: Remodeling and spacing factor 1 (1441 aa).

Residues 17-84 (PGSCPNFAVV…MRKIGKSVTA (68 aa)) enclose the DDT domain. Glycyl lysine isopeptide (Lys-Gly) (interchain with G-Cter in SUMO2) cross-links involve residues lysine 136 and lysine 215. Over residues 215–227 (KNSSQQDNSSRES) the composition is skewed to polar residues. Residues 215–283 (KNSSQQDNSS…TTVKKEKEDE (69 aa)) form a disordered region. A Phosphoserine modification is found at serine 227. 2 stretches are compositionally biased toward basic and acidic residues: residues 234-257 (ETKK…KSEE) and 274-283 (TTVKKEKEDE). Residues lysine 236, lysine 243, lysine 248, lysine 252, and lysine 254 each participate in a glycyl lysine isopeptide (Lys-Gly) (interchain with G-Cter in SUMO2) cross-link. Lysine 277 is covalently cross-linked (Glycyl lysine isopeptide (Lys-Gly) (interchain with G-Cter in SUMO1); alternate). A Glycyl lysine isopeptide (Lys-Gly) (interchain with G-Cter in SUMO2); alternate cross-link involves residue lysine 277. Glycyl lysine isopeptide (Lys-Gly) (interchain with G-Cter in SUMO2) cross-links involve residues lysine 284, lysine 288, lysine 294, lysine 305, lysine 306, lysine 309, lysine 323, lysine 327, lysine 337, lysine 342, lysine 358, lysine 373, lysine 381, and lysine 390. Residues 330 to 340 (RADPKDTKSSM) are compositionally biased toward basic and acidic residues. A disordered region spans residues 330–385 (RADPKDTKSSMEKPVAQEPERIEFGGNIKSSHEITEKSTEETEKLKNDQQAKIPLK). Basic and acidic residues predominate over residues 359–378 (SSHEITEKSTEETEKLKNDQ). Phosphoserine occurs at positions 392 and 397. Glycyl lysine isopeptide (Lys-Gly) (interchain with G-Cter in SUMO2) cross-links involve residues lysine 400, lysine 405, lysine 415, and lysine 419. Serine 429 is subject to Phosphoserine. Lysine 439 participates in a covalent cross-link: Glycyl lysine isopeptide (Lys-Gly) (interchain with G-Cter in SUMO2). Residue lysine 456 forms a Glycyl lysine isopeptide (Lys-Gly) (interchain with G-Cter in SUMO1); alternate linkage. Lysine 456 participates in a covalent cross-link: Glycyl lysine isopeptide (Lys-Gly) (interchain with G-Cter in SUMO2); alternate. Glycyl lysine isopeptide (Lys-Gly) (interchain with G-Cter in SUMO2) cross-links involve residues lysine 463 and lysine 468. The span at 467–480 (TKEESYSPSKDRNI) shows a compositional bias: basic and acidic residues. A disordered region spans residues 467–634 (TKEESYSPSK…AAETSPPSNI (168 aa)). A Phosphoserine modification is found at serine 473. Positions 482–498 (TEGNGTESLNSVITSMK) are enriched in polar residues. A Glycyl lysine isopeptide (Lys-Gly) (interchain with G-Cter in SUMO2) cross-link involves residue lysine 498. A compositionally biased stretch (basic and acidic residues) spans 500–514 (GELEKETAPLRKDAD). Serine 524 is modified (phosphoserine). The span at 552 to 562 (SKTALSSTESC) shows a compositional bias: polar residues. Residue lysine 565 forms a Glycyl lysine isopeptide (Lys-Gly) (interchain with G-Cter in SUMO2) linkage. Over residues 565-601 (KGEEKSPKTKKDKRPPILECLEKLEKSKKTFLDKDAQ) the composition is skewed to basic and acidic residues. Residues serine 570 and serine 604 each carry the phosphoserine modification. Basic and acidic residues predominate over residues 609-621 (EVPKSTLESEKPG). Serine 622 carries the phosphoserine modification. Residue threonine 628 is modified to Phosphothreonine. Position 629 is a phosphoserine (serine 629). Residues lysine 662, lysine 663, lysine 670, lysine 677, lysine 698, and lysine 709 each participate in a glycyl lysine isopeptide (Lys-Gly) (interchain with G-Cter in SUMO2) cross-link. Positions 675–887 (FTKVEMDNLD…EEKESEEAIL (213 aa)) are disordered. Serine 748 carries the post-translational modification Phosphoserine. Basic and acidic residues-rich tracts occupy residues 753 to 770 (LEPE…EKTN), 789 to 802 (AEIR…KRGE), and 816 to 831 (KTDK…KDTN). Glycyl lysine isopeptide (Lys-Gly) (interchain with G-Cter in SUMO2) cross-links involve residues lysine 758, lysine 768, lysine 795, and lysine 799. Positions 864 to 873 (GSGSEKSSAA) are enriched in low complexity. Acidic residues predominate over residues 874-887 (SEEEEEKESEEAIL). Serine 882 is modified (phosphoserine). A PHD-type zinc finger spans residues 891-941 (DEPCKKCGLPNHPELILLCDSCDSGYHTACLRPPLMIIPDGEWFCPPCQHK). Residues 942–1012 (LLCEKLEEQL…SKANLLERRS (71 aa)) are a coiled coil. Residues 983-1007 (PPQEPDFSEDQEEKKKDSKKSKANL) are disordered. Lysine 1039 participates in a covalent cross-link: Glycyl lysine isopeptide (Lys-Gly) (interchain with G-Cter in SUMO2). Residue lysine 1050 is modified to N6-acetyllysine. The disordered stretch occupies residues 1063 to 1428 (ISTILDEERK…EEEEDELLRV (366 aa)). Composition is skewed to acidic residues over residues 1094 to 1107 (LDSD…ESED) and 1120 to 1141 (VVSD…DSDT). 3 positions are modified to phosphoserine: serine 1096, serine 1098, and serine 1105. Residues 1146–1169 (RRLRRHPSRPMRQSRRLRRKTPKK) are compositionally biased toward basic residues. Over residues 1189-1199 (SDFSDDFSDDF) the composition is skewed to acidic residues. Basic residues predominate over residues 1203–1212 (RRRRSRRNQK). 3 positions are modified to phosphoserine: serine 1221, serine 1223, and serine 1226. A compositionally biased stretch (basic residues) spans 1229-1244 (SLRRGKEIRRVHKRRL). Phosphoserine occurs at positions 1258 and 1277. Threonine 1278 bears the Phosphothreonine mark. Positions 1280–1292 (EYSEADEEEEEEE) are enriched in acidic residues. Threonine 1305 is modified (phosphothreonine). A phosphoserine mark is found at serine 1325 and serine 1336. The segment covering 1335 to 1344 (ESTKKPYRIE) has biased composition (basic and acidic residues). The residue at position 1339 (lysine 1339) is an N6-acetyllysine. Residues serine 1345, serine 1359, and serine 1375 each carry the phosphoserine modification. Positions 1394–1408 (PKDNSTASASLASNG) are enriched in polar residues.

As to quaternary structure, component of the RSF-1 ISWI chromatin-remodeling complex at least composed of SMARCA1 and RSF1. Within the RSF-1 ISWI chromatin-remodeling complex interacts with SMARCA1. Component of the RSF-5 ISWI chromatin-remodeling complex (also called the RSF complex) at least composed of SMARCA5/SNF2H and RSF1. Within the RSF-5 ISWI chromatin-remodeling complex interacts with SMARCA5/SNF2H; the interaction is direct. Identified in a centromere complex containing histones H2A, H2B and H4, and at least CENPA, CENPB, CENPC, CENPT, CENPN, HJURP, SUPT16H, SSRP1 and RSF1. Also binds the HBV pX/HBx protein, which is required to activate transcription of the viral genome. Post-translationally, phosphorylated. Ubiquitously expressed. Highly expressed in the heart, skeletal muscle, kidney and placenta. Expressed at low levels in the brain and colon.

The protein localises to the nucleus. Functionally, regulatory subunit of the ATP-dependent RSF-1 and RSF-5 ISWI chromatin-remodeling complexes, which form ordered nucleosome arrays on chromatin and facilitate access to DNA during DNA-templated processes such as DNA replication, transcription, and repair. Binds to core histones together with SMARCA5, and is required for the assembly of regular nucleosome arrays by the RSF-5 ISWI chromatin-remodeling complex. Directly stimulates the ATPase activity of SMARCA1 and SMARCA5 in the RSF-1 and RSF-5 ISWI chromatin-remodeling complexes, respectively. The RSF-1 ISWI chromatin remodeling complex has a lower ATP hydrolysis rate than the RSF-5 ISWI chromatin-remodeling complex. The complexes do not have the ability to slide mononucleosomes to the center of a DNA template. Facilitates transcription of hepatitis B virus (HBV) genes by the pX transcription activator. In case of infection by HBV, together with pX, it represses TNF-alpha induced NF-kappa-B transcription activation. Represses transcription when artificially recruited to chromatin by fusion to a heterogeneous DNA binding domain. The protein is Remodeling and spacing factor 1 (RSF1) of Homo sapiens (Human).